The primary structure comprises 337 residues: MATIKDVAKLAAVSTTTVSHVINKTRFVAEATQKRVWEAVEELNYAPSAVARSLKCNTTRTIGMLVTQSFNPFFAEVMHGVENYCYKQGYTLFMCNTEGDLEKQKHYLRMLAEKRVDGLLVMCSDLNEQLLTLLEKNTELPMVIMDWGPDSPRTDKIIDNSEEGGYLATKHLIENGHTHIACITGQADKVTCKERVRGFERAHIDANLTFNPEWILEGDFECASASRAVDKILAIEENKRPTALFCFNDIMALAAISKIQQSGLRVPEDISVIGYDNIELSAYFSPPLTTIHQPKRRVGKTAVEILLERIKDKDHERRVFEMQPEVVTRSSVSNRLK.

Positions 2–56 (ATIKDVAKLAAVSTTTVSHVINKTRFVAEATQKRVWEAVEELNYAPSAVARSLKC) constitute an HTH lacI-type domain. The segment at residues 4–23 (IKDVAKLAAVSTTTVSHVIN) is a DNA-binding region (H-T-H motif). The DNA-binding element occupies 48–56 (SAVARSLKC). Hypoxanthine contacts are provided by F73, K189, T191, F220, and D276.

Homodimer.

It participates in purine metabolism; purine nucleotide biosynthesis [regulation]. Functionally, is the main repressor of the genes involved in the de novo synthesis of purine nucleotides, regulating purB, purC, purEK, purF, purHD, purL, purMN and guaBA expression. PurR is allosterically activated to bind its cognate DNA by binding the purine corepressors, hypoxanthine or guanine, thereby effecting transcription repression. The polypeptide is HTH-type transcriptional repressor PurR (Aliivibrio fischeri (strain ATCC 700601 / ES114) (Vibrio fischeri)).